The following is a 122-amino-acid chain: Fluoride-specific ion channel FluC (122 aa).

4 consecutive transmembrane segments (helical) span residues 4–24 (LAVLVGGGVGALVRYLVSIFI), 33–53 (LGTMVINTTGAFLIGFLSIYL), 66–86 (LLITGFLGGYTTFSTFTLEGI), and 95–115 (LKAFYYIVGTNVIGFLFVALG). G73 and T76 together coordinate Na(+).

Belongs to the fluoride channel Fluc/FEX (TC 1.A.43) family.

The protein resides in the cell inner membrane. The enzyme catalyses fluoride(in) = fluoride(out). Na(+) is not transported, but it plays an essential structural role and its presence is essential for fluoride channel function. Its function is as follows. Fluoride-specific ion channel. Important for reducing fluoride concentration in the cell, thus reducing its toxicity. This Hydrogenobaculum sp. (strain Y04AAS1) protein is Fluoride-specific ion channel FluC.